Consider the following 104-residue polypeptide: Protein KleF (104 aa).

The sequence is that of Protein KleF (kleF) from Escherichia coli.